We begin with the raw amino-acid sequence, 128 residues long: Large ribosomal subunit protein bL12 (128 aa).

It belongs to the bacterial ribosomal protein bL12 family. Homodimer. Part of the ribosomal stalk of the 50S ribosomal subunit. Forms a multimeric L10(L12)X complex, where L10 forms an elongated spine to which 2 to 4 L12 dimers bind in a sequential fashion. Binds GTP-bound translation factors.

Functionally, forms part of the ribosomal stalk which helps the ribosome interact with GTP-bound translation factors. Is thus essential for accurate translation. This Corynebacterium kroppenstedtii (strain DSM 44385 / JCM 11950 / CIP 105744 / CCUG 35717) protein is Large ribosomal subunit protein bL12.